The primary structure comprises 231 residues: Acyl-protein thioesterase 2 (231 aa).

A lipid anchor (S-palmitoyl cysteine) is attached at Cys2. The residue at position 82 (Ser82) is a Phosphoserine. Active-site charge relay system residues include Ser122, Asp176, and His210.

This sequence belongs to the AB hydrolase superfamily. AB hydrolase 2 family.

The protein localises to the cytoplasm. The catalysed reaction is S-hexadecanoyl-L-cysteinyl-[protein] + H2O = L-cysteinyl-[protein] + hexadecanoate + H(+). It catalyses the reaction prostaglandin E2 1-glyceryl ester + H2O = prostaglandin E2 + glycerol + H(+). The enzyme catalyses 1-hexadecanoyl-sn-glycero-3-phosphocholine + H2O = sn-glycerol 3-phosphocholine + hexadecanoate + H(+). It carries out the reaction 1-octadecanoyl-sn-glycero-3-phosphocholine + H2O = octadecanoate + sn-glycerol 3-phosphocholine + H(+). The catalysed reaction is 1-hexadecanoyl-sn-glycero-3-phosphate + H2O = sn-glycerol 3-phosphate + hexadecanoate + H(+). It catalyses the reaction 1-hexadecanoyl-sn-glycero-3-phospho-L-serine + H2O = sn-glycero-3-phospho-L-serine + hexadecanoate + H(+). Its function is as follows. Acts as an acyl-protein thioesterase hydrolyzing fatty acids from S-acylated cysteine residues in proteins such as trimeric G alpha proteins, GSDMD, GAP43, ZDHHC6 or HRAS. Deacylates GAP43. Mediates depalmitoylation of ZDHHC6. Has lysophospholipase activity. Hydrolyzes prostaglandin glycerol esters (PG-Gs) in the following order prostaglandin D2-glycerol ester (PGD2-G) &gt; prostaglandin E2 glycerol ester (PGE2-G) &gt; prostaglandin F2-alpha-glycerol ester (PGF2-alpha-G). Hydrolyzes 1-arachidonoylglycerol but not 2-arachidonoylglycerol or arachidonoylethanolamide. This Rattus norvegicus (Rat) protein is Acyl-protein thioesterase 2 (Lypla2).